The sequence spans 208 residues: Protein JLP2 (208 aa).

The segment covering 185–194 (AKKNQKKKNK) has biased composition (basic residues). The segment at 185-208 (AKKNQKKKNKQSKDEVTDDMQLEV) is disordered.

Belongs to the CCDC25 family.

It is found in the cytoplasm. This is Protein JLP2 (JLP2) from Saccharomyces cerevisiae (strain ATCC 204508 / S288c) (Baker's yeast).